We begin with the raw amino-acid sequence, 448 residues long: Bifunctional protein GlmU (448 aa).

The segment at 1-230 (MRSCLSIVLA…FDNIVGINNC (230 aa)) is pyrophosphorylase. UDP-N-acetyl-alpha-D-glucosamine is bound by residues 9–12 (LAAG), lysine 23, glutamine 76, and 81–82 (GT). A Mg(2+)-binding site is contributed by aspartate 106. Glycine 142, glutamate 156, asparagine 171, and asparagine 228 together coordinate UDP-N-acetyl-alpha-D-glucosamine. Mg(2+) is bound at residue asparagine 228. The tract at residues 231 to 251 (FELFEADSLWQKRKARDLMLS) is linker. The N-acetyltransferase stretch occupies residues 252-448 (GVTILKPETV…VRLSGNQQKK (197 aa)). The UDP-N-acetyl-alpha-D-glucosamine site is built by arginine 317 and lysine 335. The active-site Proton acceptor is histidine 347. Positions 350 and 361 each coordinate UDP-N-acetyl-alpha-D-glucosamine. Acetyl-CoA is bound by residues alanine 364, 370 to 371 (NY), serine 389, serine 407, and arginine 424.

In the N-terminal section; belongs to the N-acetylglucosamine-1-phosphate uridyltransferase family. This sequence in the C-terminal section; belongs to the transferase hexapeptide repeat family. In terms of assembly, homotrimer. The cofactor is Mg(2+).

Its subcellular location is the cytoplasm. The catalysed reaction is alpha-D-glucosamine 1-phosphate + acetyl-CoA = N-acetyl-alpha-D-glucosamine 1-phosphate + CoA + H(+). The enzyme catalyses N-acetyl-alpha-D-glucosamine 1-phosphate + UTP + H(+) = UDP-N-acetyl-alpha-D-glucosamine + diphosphate. Its pathway is nucleotide-sugar biosynthesis; UDP-N-acetyl-alpha-D-glucosamine biosynthesis; N-acetyl-alpha-D-glucosamine 1-phosphate from alpha-D-glucosamine 6-phosphate (route II): step 2/2. It functions in the pathway nucleotide-sugar biosynthesis; UDP-N-acetyl-alpha-D-glucosamine biosynthesis; UDP-N-acetyl-alpha-D-glucosamine from N-acetyl-alpha-D-glucosamine 1-phosphate: step 1/1. The protein operates within bacterial outer membrane biogenesis; LPS lipid A biosynthesis. In terms of biological role, catalyzes the last two sequential reactions in the de novo biosynthetic pathway for UDP-N-acetylglucosamine (UDP-GlcNAc). The C-terminal domain catalyzes the transfer of acetyl group from acetyl coenzyme A to glucosamine-1-phosphate (GlcN-1-P) to produce N-acetylglucosamine-1-phosphate (GlcNAc-1-P), which is converted into UDP-GlcNAc by the transfer of uridine 5-monophosphate (from uridine 5-triphosphate), a reaction catalyzed by the N-terminal domain. This is Bifunctional protein GlmU from Bartonella quintana (strain Toulouse) (Rochalimaea quintana).